A 481-amino-acid chain; its full sequence is Zygotic gap protein knirps (481 aa).

The nuclear receptor DNA-binding region spans 2–78 (NQTCKVCGEP…VGMSKGGSRY (77 aa)). 2 consecutive NR C4-type zinc fingers follow at residues 5–25 (CKVCGEPAAGFHFGAFTCEGC) and 42–66 (CKNDGKCIIDKKNRTTCKACRLRKC). Low complexity-rich tracts occupy residues 100–111 (AAAGKAPGHATG), 127–148 (QQQQQQHQQQQQQQHQHQQQQQ), 245–264 (TPPTVATVPQQSQPQPAASP), 316–335 (SHSSSASPTPSKSQSSSPLS), and 420–440 (TTNSCSSSTSTSSSNSSTSST). Disordered regions lie at residues 100-161 (AAAG…GYTG), 231-294 (SVDS…PHTI), 308-336 (LLPGLTTASHSSSASPTPSKSQSSSPLSF), and 420-442 (TTNSCSSSTSTSSSNSSTSSTEA).

The protein belongs to the nuclear hormone receptor family. NR0 subfamily.

It localises to the nucleus. Functionally, transcriptional repressor. Binds to multiple sites in the eve stripe 3 enhancer element. Plays an essential role in the segmentation process both by refining the expression patterns of gap genes and by establishing pair-rules stripes of gene expression. The protein is Zygotic gap protein knirps (kni) of Drosophila virilis (Fruit fly).